The sequence spans 213 residues: Orotate phosphoribosyltransferase (213 aa).

K26 provides a ligand contact to 5-phospho-alpha-D-ribose 1-diphosphate. 34-35 (FF) is an orotate binding site. 5-phospho-alpha-D-ribose 1-diphosphate contacts are provided by residues 72–73 (YK), R99, K100, K103, H105, and 124–132 (DDVITAGTA). Residues T128 and R156 each contribute to the orotate site.

Belongs to the purine/pyrimidine phosphoribosyltransferase family. PyrE subfamily. Homodimer. Mg(2+) is required as a cofactor.

It carries out the reaction orotidine 5'-phosphate + diphosphate = orotate + 5-phospho-alpha-D-ribose 1-diphosphate. It functions in the pathway pyrimidine metabolism; UMP biosynthesis via de novo pathway; UMP from orotate: step 1/2. In terms of biological role, catalyzes the transfer of a ribosyl phosphate group from 5-phosphoribose 1-diphosphate to orotate, leading to the formation of orotidine monophosphate (OMP). This Salmonella arizonae (strain ATCC BAA-731 / CDC346-86 / RSK2980) protein is Orotate phosphoribosyltransferase.